Reading from the N-terminus, the 382-residue chain is Alkanesulfonate monooxygenase (382 aa).

It belongs to the SsuD family. Homotetramer.

The catalysed reaction is an alkanesulfonate + FMNH2 + O2 = an aldehyde + FMN + sulfite + H2O + 2 H(+). Catalyzes the desulfonation of aliphatic sulfonates. The chain is Alkanesulfonate monooxygenase from Serratia proteamaculans (strain 568).